We begin with the raw amino-acid sequence, 289 residues long: Diaminopimelate epimerase (289 aa).

Substrate-binding residues include Asn-11 and Asn-78. Cys-87 functions as the Proton donor in the catalytic mechanism. Substrate is bound by residues 88 to 89 (GN), Asn-163, Asn-199, and 217 to 218 (ER). Residue Cys-226 is the Proton acceptor of the active site. Residue 227 to 228 (GT) coordinates substrate.

It belongs to the diaminopimelate epimerase family. As to quaternary structure, homodimer.

It is found in the cytoplasm. It catalyses the reaction (2S,6S)-2,6-diaminopimelate = meso-2,6-diaminopimelate. It functions in the pathway amino-acid biosynthesis; L-lysine biosynthesis via DAP pathway; DL-2,6-diaminopimelate from LL-2,6-diaminopimelate: step 1/1. Catalyzes the stereoinversion of LL-2,6-diaminopimelate (L,L-DAP) to meso-diaminopimelate (meso-DAP), a precursor of L-lysine and an essential component of the bacterial peptidoglycan. The chain is Diaminopimelate epimerase from Rhodococcus opacus (strain B4).